Here is a 120-residue protein sequence, read N- to C-terminus: NAD(P)H-quinone oxidoreductase subunit 3, chloroplastic (120 aa).

Transmembrane regions (helical) follow at residues 9–29 (IFWAFLIISSVIPILAFLISA), 64–84 (MFALVFVVFDVETVFLYPWAM), and 88–108 (VLGVPVFIEAFIFMLILIVGL).

It belongs to the complex I subunit 3 family. As to quaternary structure, NDH is composed of at least 16 different subunits, 5 of which are encoded in the nucleus.

It is found in the plastid. It localises to the chloroplast thylakoid membrane. The catalysed reaction is a plastoquinone + NADH + (n+1) H(+)(in) = a plastoquinol + NAD(+) + n H(+)(out). The enzyme catalyses a plastoquinone + NADPH + (n+1) H(+)(in) = a plastoquinol + NADP(+) + n H(+)(out). Functionally, NDH shuttles electrons from NAD(P)H:plastoquinone, via FMN and iron-sulfur (Fe-S) centers, to quinones in the photosynthetic chain and possibly in a chloroplast respiratory chain. The immediate electron acceptor for the enzyme in this species is believed to be plastoquinone. Couples the redox reaction to proton translocation, and thus conserves the redox energy in a proton gradient. This Citrus sinensis (Sweet orange) protein is NAD(P)H-quinone oxidoreductase subunit 3, chloroplastic.